The primary structure comprises 1049 residues: Exotoxin PaxA (1049 aa).

Helical transmembrane passes span 246–266 (GLGL…FTLA), 311–331 (GPAA…LSFL), 375–395 (ITTI…ASAG), and 397–417 (LVGA…SGIL). Hemolysin-type calcium-binding repeat units follow at residues 744–761 (KGSK…DDLL), 762–779 (NGND…NDEL), 780–797 (RGDN…NDKL), 798–815 (FGGN…DDEL), 826–843 (RGGK…SDFL), and 844–861 (DGGE…NDFY).

It belongs to the RTX prokaryotic toxin (TC 1.C.11) family.

Its subcellular location is the secreted. The protein resides in the host cell membrane. In terms of biological role, paxA is associated with abortion cases in swine and septicemia in young piglets. Shows cohemolytic activity with the sphingomyelinase of S.aureus but is devoid of direct hemolytic activity. This is Exotoxin PaxA (paxA) from Pasteurella aerogenes.